A 1058-amino-acid chain; its full sequence is Lon protease homolog, mitochondrial (1058 aa).

A mitochondrion-targeting transit peptide spans 1–47 (MLTRIRNAGVGGNAARRVRLLAGYTGARMAHAAALNSTTGAGGAARA). Positions 72–151 (GGQCILKQDR…RSNPPSEGEV (80 aa)) are disordered. Composition is skewed to basic and acidic residues over residues 78–97 (KQDR…RAEE) and 106–118 (DEEA…EEQA). Residues 129 to 142 (GSGGSASSAGGGGR) are compositionally biased toward gly residues. The Lon N-terminal domain maps to 158 to 412 (LMVLPMSNRP…KALVFIKKEV (255 aa)). Residue 564–571 (GPPGVGKT) participates in ATP binding. The segment at 778–814 (TPKSAPAETNIEPENGKPDASAKPLTNNLPAPEPLNI) is disordered. In terms of domain architecture, Lon proteolytic spans 844-1030 (KTPAGVVMGL…DDVFNVLFGS (187 aa)). Residues serine 936 and lysine 979 contribute to the active site.

Belongs to the peptidase S16 family. Homohexamer or homoheptamer. Organized in a ring with a central cavity.

The protein localises to the mitochondrion matrix. The catalysed reaction is Hydrolysis of proteins in presence of ATP.. Its function is as follows. ATP-dependent serine protease that mediates the selective degradation of misfolded, unassembled or oxidatively damaged polypeptides as well as certain short-lived regulatory proteins in the mitochondrial matrix. May also have a chaperone function in the assembly of inner membrane protein complexes. Participates in the regulation of mitochondrial gene expression and in the maintenance of the integrity of the mitochondrial genome. Binds to mitochondrial DNA in a site-specific manner. The protein is Lon protease homolog, mitochondrial of Eremothecium gossypii (strain ATCC 10895 / CBS 109.51 / FGSC 9923 / NRRL Y-1056) (Yeast).